The following is a 368-amino-acid chain: 3-dehydroquinate synthase (368 aa).

NAD(+)-binding positions include 112 to 116, 136 to 137, lysine 149, lysine 158, and 176 to 179; these read GVIGD, TT, and TLIT. Glutamate 191, histidine 256, and histidine 273 together coordinate Zn(2+).

It belongs to the sugar phosphate cyclases superfamily. Dehydroquinate synthase family. It depends on Co(2+) as a cofactor. The cofactor is Zn(2+). NAD(+) serves as cofactor.

It localises to the cytoplasm. The catalysed reaction is 7-phospho-2-dehydro-3-deoxy-D-arabino-heptonate = 3-dehydroquinate + phosphate. Its pathway is metabolic intermediate biosynthesis; chorismate biosynthesis; chorismate from D-erythrose 4-phosphate and phosphoenolpyruvate: step 2/7. Catalyzes the conversion of 3-deoxy-D-arabino-heptulosonate 7-phosphate (DAHP) to dehydroquinate (DHQ). The chain is 3-dehydroquinate synthase from Prochlorococcus marinus (strain NATL2A).